A 1220-amino-acid chain; its full sequence is ATP-dependent helicase/deoxyribonuclease subunit B (1220 aa).

In terms of domain architecture, UvrD-like helicase ATP-binding spans 1–281 (MSMRFIVGRA…VFLTETHRFE (281 aa)). Position 8–15 (8–15 (GRAGTGKS)) interacts with ATP. In terms of domain architecture, UvrD-like helicase C-terminal spans 283–590 (AGLKHLERFY…LVGSLDRSRN (308 aa)). Position 788 (Cys788) interacts with [4Fe-4S] cluster. A disordered region spans residues 989 to 1008 (LAEGSKGSEGSEGSEDSEDS). The [4Fe-4S] cluster site is built by Cys1128, Cys1131, and Cys1137. Polar residues predominate over residues 1162 to 1171 (RVQSQDSEQY). Positions 1162-1220 (RVQSQDSEQYPEQHPPTSVPGETSRRALQKDGGNSPRGQELIWLGEDEAGAGKEDDGHE) are disordered. The segment covering 1211-1220 (GAGKEDDGHE) has biased composition (basic and acidic residues).

Belongs to the helicase family. AddB/RexB type 1 subfamily. Heterodimer of AddA and AddB. It depends on Mg(2+) as a cofactor. Requires [4Fe-4S] cluster as cofactor.

The heterodimer acts as both an ATP-dependent DNA helicase and an ATP-dependent, dual-direction single-stranded exonuclease. Recognizes the chi site generating a DNA molecule suitable for the initiation of homologous recombination. The AddB subunit has 5' -&gt; 3' nuclease activity but not helicase activity. The sequence is that of ATP-dependent helicase/deoxyribonuclease subunit B from Desulfitobacterium hafniense (strain Y51).